A 361-amino-acid polypeptide reads, in one-letter code: Serpentine receptor class X 45 (361 aa).

The next 7 helical transmembrane spans lie at 20–40 (LLIFFTSFIGFACNTFIAFYI), 58–78 (AAGDAVFVLVWAFYFAPVLFF), 92–112 (FAQLCLICYDISIYTHLVISL), 133–153 (TTFLICSIIFVSFGFSWFLVI), 176–196 (MINVYYAEFFRGLIVISMFAI), 242–262 (LLYVIELVTYFYISLRFPVPL), and 278–298 (LLTTYAWILVHALDGVITLIF). N-linked (GlcNAc...) asparagine glycosylation occurs at N317.

It belongs to the G-protein coupled receptor 1 family.

The protein resides in the cell membrane. In Caenorhabditis elegans, this protein is Serpentine receptor class X 45 (srx-45).